The sequence spans 290 residues: Enoyl-CoA hydratase, mitochondrial (290 aa).

Residues 1–29 constitute a mitochondrion transit peptide; the sequence is MAALRALLPRACNSLLSPVRCPEFRRFAS. 98–101 provides a ligand contact to substrate; it reads ADIK. N6-acetyllysine; alternate is present on residues Lys101 and Lys115. Residues Lys101 and Lys115 each carry the N6-succinyllysine; alternate modification. Gly141 contributes to the substrate binding site. N6-succinyllysine is present on Lys204. At Lys211 the chain carries N6-acetyllysine.

This sequence belongs to the enoyl-CoA hydratase/isomerase family. Homohexamer; dimer of trimers. In terms of tissue distribution, detected in liver (at protein level).

Its subcellular location is the mitochondrion matrix. It carries out the reaction a (3S)-3-hydroxyacyl-CoA = a (2E)-enoyl-CoA + H2O. The enzyme catalyses a (3E)-enoyl-CoA = a 4-saturated (2E)-enoyl-CoA. The catalysed reaction is (3E)-hexenoyl-CoA = (2E)-hexenoyl-CoA. It catalyses the reaction (3S)-3-hydroxybutanoyl-CoA = (2E)-butenoyl-CoA + H2O. It carries out the reaction 3-hydroxyisovaleryl-CoA = 3-methylbut-2-enoyl-CoA + H2O. The enzyme catalyses 3-hydroxypropanoyl-CoA = acryloyl-CoA + H2O. The catalysed reaction is 3-hydroxybutanoyl-CoA = (2E)-butenoyl-CoA + H2O. It catalyses the reaction 2-methylpropenoyl-CoA + H2O = (S)-3-hydroxyisobutanoyl-CoA. It carries out the reaction (3S)-hydroxyhexanoyl-CoA = (2E)-hexenoyl-CoA + H2O. The enzyme catalyses (3S)-hydroxydecanoyl-CoA = (2E)-decenoyl-CoA + H2O. It participates in lipid metabolism; fatty acid beta-oxidation. Converts unsaturated trans-2-enoyl-CoA species ((2E)-enoyl-CoA) to the corresponding 3(S)-3-hydroxyacyl-CoA species through addition of a water molecule to the double bond. Catalyzes the hydration of medium- and short-chained fatty enoyl-CoA thioesters from 4 carbons long (C4) up to C16. Has high substrate specificity for crotonyl-CoA ((2E)-butenoyl-CoA) and moderate specificity for acryloyl-CoA, 3-methylcrotonyl-CoA (3-methyl-(2E)-butenoyl-CoA) and methacrylyl-CoA ((2E)-2-methylpropenoyl-CoA). Can bind tiglyl-CoA (2-methylcrotonoyl-CoA), but hydrates only a small amount of this substrate. Plays a key role in the beta-oxidation spiral of short- and medium-chain fatty acid oxidation. At a lower rate than the hydratase reaction, catalyzes the isomerase reaction of trans-3-enoyl-CoA species (such as (3E)-hexenoyl-CoA) to trans-2-enoyl-CoA species (such as (2E)-hexenoyl-CoA), which are subsequently hydrated to 3(S)-3-hydroxyacyl-CoA species (such as (3S)-hydroxyhexanoyl-CoA). The chain is Enoyl-CoA hydratase, mitochondrial from Rattus norvegicus (Rat).